A 633-amino-acid polypeptide reads, in one-letter code: Probable potassium transport system protein Kup 2 (633 aa).

12 helical membrane passes run 18-38, 61-81, 107-127, 143-163, 173-193, 211-231, 255-275, 287-307, 345-365, 371-391, 402-422, and 427-447; these read FLALTIGAIGVVYGDIGTSPL, LVSLVLWTLTAIVTIKYVLFL, PVLMFFAGVLGAALFIGDAMI, VAPALHDYVLPISVVIILLLF, VSVFFGPITLVWFLMMAAAGV, AIGFLWNAGLIGFIVLGAIFL, WFAVVFPALALNYLGQGALVL, LMFPNWALLPMVILATAATII, IYLPLVNTILLTGVLALMLMF, LAPAYGVSITGAMVIDTILAF, ALTAIAVLLPLFNLELVFLGA, and VHHGGYVPILIAGTLITMMWT.

This sequence belongs to the HAK/KUP transporter (TC 2.A.72) family.

It localises to the cell inner membrane. The catalysed reaction is K(+)(in) + H(+)(in) = K(+)(out) + H(+)(out). Transport of potassium into the cell. Likely operates as a K(+):H(+) symporter. This is Probable potassium transport system protein Kup 2 from Rhizobium meliloti (strain 1021) (Ensifer meliloti).